We begin with the raw amino-acid sequence, 221 residues long: Protein-L-isoaspartate O-methyltransferase (221 aa).

S64 is an active-site residue.

Belongs to the methyltransferase superfamily. L-isoaspartyl/D-aspartyl protein methyltransferase family.

The protein resides in the cytoplasm. The catalysed reaction is [protein]-L-isoaspartate + S-adenosyl-L-methionine = [protein]-L-isoaspartate alpha-methyl ester + S-adenosyl-L-homocysteine. In terms of biological role, catalyzes the methyl esterification of L-isoaspartyl residues in peptides and proteins that result from spontaneous decomposition of normal L-aspartyl and L-asparaginyl residues. It plays a role in the repair and/or degradation of damaged proteins. This is Protein-L-isoaspartate O-methyltransferase from Cytophaga hutchinsonii (strain ATCC 33406 / DSM 1761 / CIP 103989 / NBRC 15051 / NCIMB 9469 / D465).